A 79-amino-acid polypeptide reads, in one-letter code: Conotoxin Leo-O4 (79 aa).

A signal peptide spans 1 to 22 (MKLTCMMLVAVLFLTAWTFVTA). The propeptide occupies 23 to 51 (NVSRNGLENLFPEERHEMMNPNAAKLNNR). 3 cysteine pairs are disulfide-bonded: cysteine 53-cysteine 70, cysteine 60-cysteine 74, and cysteine 69-cysteine 78.

This sequence belongs to the conotoxin O1 superfamily. In terms of tissue distribution, expressed by the venom duct.

The protein localises to the secreted. This Conus leopardus (Leopard cone) protein is Conotoxin Leo-O4.